The primary structure comprises 330 residues: Ketol-acid reductoisomerase (NADP(+)) (330 aa).

The 181-residue stretch at methionine 1–threonine 181 folds into the KARI N-terminal Rossmann domain. Residues tyrosine 24 to glutamine 27, arginine 47, serine 50, serine 52, and aspartate 82 to glutamine 85 each bind NADP(+). The active site involves histidine 107. Glycine 133 is a binding site for NADP(+). Residues threonine 182–leucine 327 enclose the KARI C-terminal knotted domain. Mg(2+) is bound by residues aspartate 190, glutamate 194, glutamate 226, and glutamate 230. Serine 251 contributes to the substrate binding site.

It belongs to the ketol-acid reductoisomerase family. The cofactor is Mg(2+).

It carries out the reaction (2R)-2,3-dihydroxy-3-methylbutanoate + NADP(+) = (2S)-2-acetolactate + NADPH + H(+). It catalyses the reaction (2R,3R)-2,3-dihydroxy-3-methylpentanoate + NADP(+) = (S)-2-ethyl-2-hydroxy-3-oxobutanoate + NADPH + H(+). It participates in amino-acid biosynthesis; L-isoleucine biosynthesis; L-isoleucine from 2-oxobutanoate: step 2/4. The protein operates within amino-acid biosynthesis; L-valine biosynthesis; L-valine from pyruvate: step 2/4. Its function is as follows. Involved in the biosynthesis of branched-chain amino acids (BCAA). Catalyzes an alkyl-migration followed by a ketol-acid reduction of (S)-2-acetolactate (S2AL) to yield (R)-2,3-dihydroxy-isovalerate. In the isomerase reaction, S2AL is rearranged via a Mg-dependent methyl migration to produce 3-hydroxy-3-methyl-2-ketobutyrate (HMKB). In the reductase reaction, this 2-ketoacid undergoes a metal-dependent reduction by NADPH to yield (R)-2,3-dihydroxy-isovalerate. The polypeptide is Ketol-acid reductoisomerase (NADP(+)) (Chlorobium phaeovibrioides (strain DSM 265 / 1930) (Prosthecochloris vibrioformis (strain DSM 265))).